The primary structure comprises 503 residues: WD repeat-containing protein 55 homolog (503 aa).

2 disordered regions span residues 1–21 (MHTH…DLDD) and 35–132 (ALVG…DDLD). 3 stretches are compositionally biased toward acidic residues: residues 12–21 (DADELDDLDD), 40–50 (DVSDSDIDEHD), and 78–96 (NAED…DEAE). WD repeat units lie at residues 157–196 (KLED…NKLL), 201–242 (VHSK…KLYE), 244–282 (AHDD…PIFE), 285–324 (EVED…LYVQ), 327–366 (PYEE…YHCD), and 411–450 (QHNM…DFGD). Residues 483–503 (TKEDEDNADNNDAAAGPSNSA) form a disordered region.

Belongs to the WD repeat WDR55 family.

This chain is WD repeat-containing protein 55 homolog, found in Drosophila persimilis (Fruit fly).